The following is a 242-amino-acid chain: TLC domain-containing protein 5 (242 aa).

6 helical membrane passes run 3–23 (LFIVETSCSLISWLFLYLLLC), 37–57 (LVTLFHGILIICLTAYIGFIA), 74–94 (ILTLVLSLGYFLFDMAWCVYF), 109–129 (IFGILLALGLGESGIETCAVL), 154–174 (LAGDVVDLLFILLFASVRIGV), and 190–210 (LIVKVGGVAIYTLSWIFMVDI). The 192-residue stretch at 28 to 219 (GRDSEWNCRL…IARFACRKTC (192 aa)) folds into the TLC domain.

It belongs to the TLCD5 family.

The protein localises to the membrane. In Danio rerio (Zebrafish), this protein is TLC domain-containing protein 5 (tlcd5).